The primary structure comprises 126 residues: Fluoride-specific ion channel FluC (126 aa).

Helical transmembrane passes span 3–23 (LSILAVGIGGALGSLFRWFLG), 35–55 (LGTLASNVIAGYIIGAAVAYF), 68–88 (FIITGLMGGLSTFSTFSAEVV), and 103–123 (IAIHVTASVIATVLGITTVAV). 2 residues coordinate Na(+): Gly75 and Ser78.

It belongs to the fluoride channel Fluc/FEX (TC 1.A.43) family.

Its subcellular location is the cell inner membrane. It carries out the reaction fluoride(in) = fluoride(out). With respect to regulation, na(+) is not transported, but it plays an essential structural role and its presence is essential for fluoride channel function. In terms of biological role, fluoride-specific ion channel. Important for reducing fluoride concentration in the cell, thus reducing its toxicity. The sequence is that of Fluoride-specific ion channel FluC from Paraburkholderia phymatum (strain DSM 17167 / CIP 108236 / LMG 21445 / STM815) (Burkholderia phymatum).